The chain runs to 199 residues: Holliday junction branch migration complex subunit RuvA (199 aa).

The segment at 1–65 is domain I; it reads MIASLRGKLL…DRGQRLFGFG (65 aa). A domain II region spans residues 66–144; sequence SKKDRESFEL…KFEMFLNEGT (79 aa). The interval 145–155 is flexible linker; the sequence is TESSFVDRETD. The domain III stretch occupies residues 155-199; that stretch reads DLATLALIQLGFDEKSATKQVADAKKLNPGLSASDIVKQVITGTR.

This sequence belongs to the RuvA family. In terms of assembly, homotetramer. Forms an RuvA(8)-RuvB(12)-Holliday junction (HJ) complex. HJ DNA is sandwiched between 2 RuvA tetramers; dsDNA enters through RuvA and exits via RuvB. An RuvB hexamer assembles on each DNA strand where it exits the tetramer. Each RuvB hexamer is contacted by two RuvA subunits (via domain III) on 2 adjacent RuvB subunits; this complex drives branch migration. In the full resolvosome a probable DNA-RuvA(4)-RuvB(12)-RuvC(2) complex forms which resolves the HJ.

It is found in the cytoplasm. The RuvA-RuvB-RuvC complex processes Holliday junction (HJ) DNA during genetic recombination and DNA repair, while the RuvA-RuvB complex plays an important role in the rescue of blocked DNA replication forks via replication fork reversal (RFR). RuvA specifically binds to HJ cruciform DNA, conferring on it an open structure. The RuvB hexamer acts as an ATP-dependent pump, pulling dsDNA into and through the RuvAB complex. HJ branch migration allows RuvC to scan DNA until it finds its consensus sequence, where it cleaves and resolves the cruciform DNA. The chain is Holliday junction branch migration complex subunit RuvA from Leptospira biflexa serovar Patoc (strain Patoc 1 / Ames).